A 146-amino-acid polypeptide reads, in one-letter code: MLLRKGTVYVLVIRADLVNAMVAHARRDHPDEACGVLAGPEGSDRPERHIPMTNAERSPTFYRLDSGEQLKVWRAMEDADEVPVVIYHSHTATEAYPSRTDVKLATEPDAHYVLVSTRDPHRHELRSYRIVDGAVTEEPVNVVEQY.

In terms of domain architecture, MPN spans 11-134; the sequence is LVIRADLVNA…LRSYRIVDGA (124 aa). Residues His88, His90, and Asp101 each contribute to the Zn(2+) site. A JAMM motif motif is present at residues 88 to 101; it reads HSHTATEAYPSRTD.

The protein belongs to the peptidase M67A family. Zn(2+) serves as cofactor.

The catalysed reaction is [CysO sulfur-carrier protein]-Gly-NH-CH2-C(O)-S-L-Cys + H2O = [CysO sulfur-carrier protein]-C-terminal Gly-Gly + L-cysteine + H(+). It participates in amino-acid biosynthesis; L-cysteine biosynthesis. Its function is as follows. Protease that hydrolyzes the covalent CysO-cysteine adduct synthesized by CysM to release L-cysteine and regenerate CysO. The chain is CysO-cysteine peptidase (mec) from Mycobacterium bovis (strain ATCC BAA-935 / AF2122/97).